A 1212-amino-acid chain; its full sequence is uncharacterized protein (1212 aa).

Residues 783–802 (TRQDASGGSSSGTKKGEKLQ) form a disordered region.

This is an uncharacterized protein from Human herpesvirus 6B (strain Z29) (HHV-6 variant B).